The following is a 275-amino-acid chain: Adaptin ear-binding coat-associated protein 1 (275 aa).

Residues 166-190 form a disordered region; sequence ITTKKGGTSKPKTAGTGGLSLLPPP. The span at 167-179 shows a compositional bias: low complexity; it reads TTKKGGTSKPKTA. Thr-211 is subject to Phosphothreonine. Residues 215–275 form a disordered region; sequence IPKSNHGGSD…APQPSNWVQF (61 aa). 2 short sequence motifs (WXXF motif) span residues 252-255 and 272-275; these read WGDF and WVQF. Polar residues predominate over residues 256–275; that stretch reads STASSSVPNQAPQPSNWVQF.

Belongs to the NECAP family. Interacts with AP1G1 and AP2A1 components of the adapter protein complexes AP-1 and AP-2. Interacts with the GAE domain proteins GGA1, GGA2 and GGA3.

The protein resides in the cytoplasmic vesicle. It localises to the clathrin-coated vesicle membrane. The protein localises to the cell membrane. Involved in endocytosis. In Bos taurus (Bovine), this protein is Adaptin ear-binding coat-associated protein 1 (NECAP1).